A 108-amino-acid polypeptide reads, in one-letter code: UPF0060 membrane protein DSY4629 (108 aa).

The next 4 helical transmembrane spans lie at Ile-5 to Trp-25, Pro-31 to Leu-51, Val-60 to Asp-80, and Asn-86 to Pro-106.

Belongs to the UPF0060 family.

Its subcellular location is the cell membrane. The chain is UPF0060 membrane protein DSY4629 from Desulfitobacterium hafniense (strain Y51).